We begin with the raw amino-acid sequence, 236 residues long: Cancer/testis antigen 55 (236 aa).

The segment at Arg-57–Pro-84 is disordered.

In terms of assembly, interacts with GABARAP; this interaction may be important for GABARAP protein stability. Interacts with LAMP2; this interaction may be important for LAMP2 protein stability. Expressed in spermatozoa (at protein level).

It is found in the cytoplasm. The protein resides in the cytoplasmic vesicle. The protein localises to the secretory vesicle. It localises to the acrosome. Its subcellular location is the cell projection. It is found in the cilium. The protein resides in the flagellum. Plays a role in spermatogenesis, possibly acting in the regulation of the autophagy pathway. This Mus musculus (Mouse) protein is Cancer/testis antigen 55 (Ct55).